The following is a 445-amino-acid chain: Putative diacyglycerol O-acyltransferase Rv2285 (445 aa).

The Proton acceptor role is filled by His135.

This sequence belongs to the long-chain O-acyltransferase family.

The catalysed reaction is an acyl-CoA + a 1,2-diacyl-sn-glycerol = a triacyl-sn-glycerol + CoA. The enzyme catalyses di-(9Z)-octadecenoylglycerol + (9Z)-octadecenoyl-CoA = 1,2,3-tri-(9Z-octadecenoyl)-glycerol + CoA. It functions in the pathway glycerolipid metabolism; triacylglycerol biosynthesis. In terms of biological role, catalyzes the terminal and only committed step in triacylglycerol synthesis by using diacylglycerol and fatty acyl CoA as substrates. Required for storage lipid synthesis. Its function is as follows. Upon expression in E.coli functions weakly as a triacylglycerol synthase, making triacylglycerol (TG) from diolein and long-chain fatty acyl-CoA. Has very weak wax synthase activity, incorporating palmityl alcohol into wax esters in the presence of palmitoyl-CoA. The sequence is that of Putative diacyglycerol O-acyltransferase Rv2285 from Mycobacterium tuberculosis (strain ATCC 25618 / H37Rv).